The sequence spans 253 residues: Malonyl-[acyl-carrier protein] O-methyltransferase (253 aa).

This sequence belongs to the methyltransferase superfamily.

It catalyses the reaction malonyl-[ACP] + S-adenosyl-L-methionine = malonyl-[ACP] methyl ester + S-adenosyl-L-homocysteine. Its pathway is cofactor biosynthesis; biotin biosynthesis. In terms of biological role, converts the free carboxyl group of a malonyl-thioester to its methyl ester by transfer of a methyl group from S-adenosyl-L-methionine (SAM). It allows to synthesize pimeloyl-ACP via the fatty acid synthetic pathway. The chain is Malonyl-[acyl-carrier protein] O-methyltransferase from Pectobacterium atrosepticum (strain SCRI 1043 / ATCC BAA-672) (Erwinia carotovora subsp. atroseptica).